Here is a 273-residue protein sequence, read N- to C-terminus: DNA repair protein RecO (273 aa).

Belongs to the RecO family.

Its function is as follows. Involved in DNA repair and RecF pathway recombination. This is DNA repair protein RecO from Saccharopolyspora erythraea (strain ATCC 11635 / DSM 40517 / JCM 4748 / NBRC 13426 / NCIMB 8594 / NRRL 2338).